The chain runs to 290 residues: Zinc finger matrin-type protein 3 (290 aa).

2 Matrin-type zinc fingers span residues 70-100 (LFCK…KLRN) and 148-178 (DYCK…RLRL). Disordered stretches follow at residues 182–203 (QSHS…EGSE) and 266–290 (ESKQ…GYVQ). A Matrin-type 3 zinc finger spans residues 246-276 (FYCSMCNVGAGEEVEFRQHLESKQHKSKVSE). Positions 266–283 (ESKQHKSKVSEQRYRSEM) are enriched in basic and acidic residues.

Interacts with dsRNA. Constitutively expressed in brain and testis. Also expressed in lung, kidney and spleen after whole body gamma irradiation.

It localises to the nucleus. It is found in the nucleolus. Acts as a bona fide target gene of p53/TP53. May play a role in the TP53-dependent growth regulatory pathway. May contribute to TP53-mediated apoptosis by regulation of TP53 expression and translocation to the nucleus and nucleolus. This chain is Zinc finger matrin-type protein 3, found in Mus musculus (Mouse).